We begin with the raw amino-acid sequence, 171 residues long: ATP synthase subunit b (171 aa).

Residues 32–52 (FFAVLLIFLIVLGVIAKWVVP) traverse the membrane as a helical segment.

Belongs to the ATPase B chain family. F-type ATPases have 2 components, F(1) - the catalytic core - and F(0) - the membrane proton channel. F(1) has five subunits: alpha(3), beta(3), gamma(1), delta(1), epsilon(1). F(0) has three main subunits: a(1), b(2) and c(10-14). The alpha and beta chains form an alternating ring which encloses part of the gamma chain. F(1) is attached to F(0) by a central stalk formed by the gamma and epsilon chains, while a peripheral stalk is formed by the delta and b chains.

It is found in the cell membrane. Functionally, f(1)F(0) ATP synthase produces ATP from ADP in the presence of a proton or sodium gradient. F-type ATPases consist of two structural domains, F(1) containing the extramembraneous catalytic core and F(0) containing the membrane proton channel, linked together by a central stalk and a peripheral stalk. During catalysis, ATP synthesis in the catalytic domain of F(1) is coupled via a rotary mechanism of the central stalk subunits to proton translocation. Its function is as follows. Component of the F(0) channel, it forms part of the peripheral stalk, linking F(1) to F(0). The protein is ATP synthase subunit b of Mycolicibacterium gilvum (strain PYR-GCK) (Mycobacterium gilvum (strain PYR-GCK)).